Reading from the N-terminus, the 421-residue chain is Serine hydroxymethyltransferase (421 aa).

(6S)-5,6,7,8-tetrahydrofolate is bound by residues L121 and 125–127 (GHL). K229 is subject to N6-(pyridoxal phosphate)lysine.

It belongs to the SHMT family. As to quaternary structure, homodimer. Pyridoxal 5'-phosphate is required as a cofactor.

Its subcellular location is the cytoplasm. It carries out the reaction (6R)-5,10-methylene-5,6,7,8-tetrahydrofolate + glycine + H2O = (6S)-5,6,7,8-tetrahydrofolate + L-serine. The protein operates within one-carbon metabolism; tetrahydrofolate interconversion. Its pathway is amino-acid biosynthesis; glycine biosynthesis; glycine from L-serine: step 1/1. Its function is as follows. Catalyzes the reversible interconversion of serine and glycine with tetrahydrofolate (THF) serving as the one-carbon carrier. This reaction serves as the major source of one-carbon groups required for the biosynthesis of purines, thymidylate, methionine, and other important biomolecules. Also exhibits THF-independent aldolase activity toward beta-hydroxyamino acids, producing glycine and aldehydes, via a retro-aldol mechanism. The polypeptide is Serine hydroxymethyltransferase (Haemophilus influenzae (strain PittGG)).